Consider the following 152-residue polypeptide: MRKMLAYTLYIVTYLTYIMNEVECKPYTLPYRNPTDTEIENNTPIKISDTPIPDVDTAVEKKVIEYLVSKNYLRQEHFNTWENLKSLHVLTPGEAQQMIRFKRKERRAILNLQKDYSLPQTGIVDNGVREIIFGSICGTADVDEDSYEEKKR.

The first 24 residues, 1–24, serve as a signal peptide directing secretion; it reads MRKMLAYTLYIVTYLTYIMNEVEC.

This is an uncharacterized protein from Acheta domesticus (House cricket).